Reading from the N-terminus, the 337-residue chain is Ketol-acid reductoisomerase (NAD(P)(+)) (337 aa).

Residues 2–187 (ARMFYDADAN…GCTRAGVIET (186 aa)) form the KARI N-terminal Rossmann domain. Residues 25-28 (FGSQ), Arg48, and 88-91 (DEVQ) contribute to the NADP(+) site. His113 is a catalytic residue. Position 139 (Gly139) interacts with NADP(+). In terms of domain architecture, KARI C-terminal knotted spans 188–333 (SFQEETETDL…AELRGMMPWL (146 aa)). The Mg(2+) site is built by Asp196, Glu200, Glu232, and Glu236. Ser257 contributes to the substrate binding site.

This sequence belongs to the ketol-acid reductoisomerase family. Mg(2+) serves as cofactor.

The catalysed reaction is (2R)-2,3-dihydroxy-3-methylbutanoate + NAD(+) = (2S)-2-acetolactate + NADH + H(+). The enzyme catalyses (2R)-2,3-dihydroxy-3-methylbutanoate + NADP(+) = (2S)-2-acetolactate + NADPH + H(+). It functions in the pathway amino-acid biosynthesis; L-isoleucine biosynthesis; L-isoleucine from 2-oxobutanoate: step 2/4. It participates in amino-acid biosynthesis; L-valine biosynthesis; L-valine from pyruvate: step 2/4. Its function is as follows. Involved in the biosynthesis of branched-chain amino acids (BCAA). Catalyzes an alkyl-migration followed by a ketol-acid reduction of (S)-2-acetolactate (S2AL) to yield (R)-2,3-dihydroxy-isovalerate. In the isomerase reaction, S2AL is rearranged via a Mg-dependent methyl migration to produce 3-hydroxy-3-methyl-2-ketobutyrate (HMKB). In the reductase reaction, this 2-ketoacid undergoes a metal-dependent reduction by NADPH or NADH to yield (R)-2,3-dihydroxy-isovalerate. This is Ketol-acid reductoisomerase (NAD(P)(+)) from Syntrophomonas wolfei subsp. wolfei (strain DSM 2245B / Goettingen).